We begin with the raw amino-acid sequence, 276 residues long: MSARWTTAVLDPQMTGGLAVARSPEGFLVDANGALFPRDWLKRQDLDVLCEHGIGHFDGQPVFLLELRSATDVPGCSWRGLRAFMLEGDFDTYKVLGYAAQIGTWAREHRFCGSCGQPMTQIRWERAMYCQPCDLRSYPRISPSMIVLVTRGDEILLARSPRFVTGVYSTLAGFAEPGESAEDCLVREVREEVAVEVKNIQYVGSQCWPFPHSMMLGFHAEYAGGEIVMQPDEIEDAKWFSVHDLPPLPAGRSIARYLIDLYVARRLGCDIPAFPS.

Arg82 lines the substrate pocket. Zn(2+) is bound by residues Cys112 and Cys115. A substrate-binding site is contributed by Glu125. 2 residues coordinate Zn(2+): Cys130 and Cys133. Tyr138 contributes to the substrate binding site. The 124-residue stretch at 139 to 262 (PRISPSMIVL…SIARYLIDLY (124 aa)) folds into the Nudix hydrolase domain. A divalent metal cation contacts are provided by Ala172, Glu188, and Glu192. The short motif at 173 to 194 (GFAEPGESAEDCLVREVREEVA) is the Nudix box element. Residue 206-213 (QCWPFPHS) coordinates substrate. Position 233 (Glu233) interacts with a divalent metal cation. Substrate is bound at residue Ala255.

Belongs to the Nudix hydrolase family. NudC subfamily. Homodimer. Mg(2+) serves as cofactor. It depends on Mn(2+) as a cofactor. Zn(2+) is required as a cofactor.

The catalysed reaction is a 5'-end NAD(+)-phospho-ribonucleoside in mRNA + H2O = a 5'-end phospho-adenosine-phospho-ribonucleoside in mRNA + beta-nicotinamide D-ribonucleotide + 2 H(+). The enzyme catalyses NAD(+) + H2O = beta-nicotinamide D-ribonucleotide + AMP + 2 H(+). It catalyses the reaction NADH + H2O = reduced beta-nicotinamide D-ribonucleotide + AMP + 2 H(+). In terms of biological role, mRNA decapping enzyme that specifically removes the nicotinamide adenine dinucleotide (NAD) cap from a subset of mRNAs by hydrolyzing the diphosphate linkage to produce nicotinamide mononucleotide (NMN) and 5' monophosphate mRNA. The NAD-cap is present at the 5'-end of some mRNAs and stabilizes RNA against 5'-processing. Has preference for mRNAs with a 5'-end purine. Catalyzes the hydrolysis of a broad range of dinucleotide pyrophosphates. The chain is NAD-capped RNA hydrolase NudC from Pseudomonas putida (strain ATCC 47054 / DSM 6125 / CFBP 8728 / NCIMB 11950 / KT2440).